Reading from the N-terminus, the 245-residue chain is Uridylate kinase (245 aa).

16-19 is a binding site for ATP; it reads KLSG. Glycine 58 contributes to the UMP binding site. Residues glycine 59 and arginine 63 each coordinate ATP. UMP contacts are provided by residues aspartate 78 and 139-146; that span reads TGNPFFTT. The ATP site is built by threonine 166, tyrosine 172, and aspartate 175.

The protein belongs to the UMP kinase family. In terms of assembly, homohexamer.

The protein resides in the cytoplasm. It catalyses the reaction UMP + ATP = UDP + ADP. Its pathway is pyrimidine metabolism; CTP biosynthesis via de novo pathway; UDP from UMP (UMPK route): step 1/1. With respect to regulation, inhibited by UTP. Functionally, catalyzes the reversible phosphorylation of UMP to UDP. The chain is Uridylate kinase from Idiomarina loihiensis (strain ATCC BAA-735 / DSM 15497 / L2-TR).